Reading from the N-terminus, the 279-residue chain is Lactose operon transcription activator (279 aa).

The 99-residue stretch at 174-272 folds into the HTH araC/xylS-type domain; the sequence is QHAVDFINTN…EISASEYRHH (99 aa). DNA-binding regions (H-T-H motif) lie at residues 191–212 and 239–262; these read EDVA…KKNL and ISDI…TKHF.

Its function is as follows. Transcriptional regulator of the lacPH genes for lactose utilization. The chain is Lactose operon transcription activator (lacR) from Staphylococcus xylosus.